A 42-amino-acid polypeptide reads, in one-letter code: Cytochrome b559 subunit beta (42 aa).

Residues 17 to 33 (WLAIHAIGIPAVFFIGS) form a helical membrane-spanning segment. Histidine 21 is a binding site for heme.

This sequence belongs to the PsbE/PsbF family. As to quaternary structure, heterodimer of an alpha subunit and a beta subunit. PSII is composed of 1 copy each of membrane proteins PsbA, PsbB, PsbC, PsbD, PsbE, PsbF, PsbH, PsbI, PsbJ, PsbK, PsbL, PsbM, PsbT, PsbX, PsbY, PsbZ, Psb30/Ycf12, at least 3 peripheral proteins of the oxygen-evolving complex and a large number of cofactors. It forms dimeric complexes. Requires heme b as cofactor.

It is found in the plastid. Its subcellular location is the cyanelle thylakoid membrane. Its function is as follows. This b-type cytochrome is tightly associated with the reaction center of photosystem II (PSII). PSII is a light-driven water:plastoquinone oxidoreductase that uses light energy to abstract electrons from H(2)O, generating O(2) and a proton gradient subsequently used for ATP formation. It consists of a core antenna complex that captures photons, and an electron transfer chain that converts photonic excitation into a charge separation. The protein is Cytochrome b559 subunit beta of Cyanophora paradoxa.